The primary structure comprises 601 residues: Deuterosome assembly protein 1 (601 aa).

3 coiled-coil regions span residues 14–59 (CEAE…NAQT), 86–197 (TQNY…KQQR), and 226–278 (IEKL…LQSR). Disordered stretches follow at residues 115 to 135 (MKQNQSHRKEASNKDETPFEL) and 188 to 213 (QTQLNGKQQRPEDSSPETPRLVCESS). The segment covering 121 to 131 (HRKEASNKDET) has biased composition (basic and acidic residues). Residues 307–326 (DNRKRVESSYSPSTKEPERK) are disordered. Residues 340–397 (HEKELNKMRSQLYQEEDLCSEQERMRNEISELTQELHQKEVTIATIMKKAALLERQLK) adopt a coiled-coil conformation. Serine 544 is modified (phosphoserine). The stretch at 555–586 (AAQHFLMEEEKRAKELEKLLNTHIDELQRHTE) forms a coiled coil.

The protein belongs to the CEP63 family. In terms of assembly, interacts with CEP152; the interaction is mutually exclusive with CEP63.

It is found in the cytoplasm. Its function is as follows. Key structural component of the deuterosome, a structure that promotes de novo centriole amplification in multiciliated cells. Deuterosome-mediated centriole amplification occurs in terminally differentiated multiciliated cells and can generate more than 100 centrioles. Probably sufficient for the specification and formation of the deuterosome inner core. Interacts with CEP152 and recruits PLK4 to activate centriole biogenesis. The protein is Deuterosome assembly protein 1 of Rattus norvegicus (Rat).